A 196-amino-acid chain; its full sequence is MNPASLILLAFAMSTDAFAASIGRGAELRKVRLLSALRIGAVFGVVEAIMPLLGWALGHVAMRFVSGVDHWIAFVMLALLGGHMIWAGVKKEDCAAIKAAETQPENRSIWLIAFTALATSIDAMAVGITLALTDINIIAASVAIGLATALMVTLGTLLGRAIGTIVGKWAEILGGLILIGIGIAVLYEHLAGLASA.

The next 6 helical transmembrane spans lie at 3 to 23 (PASLILLAFAMSTDAFAASIG), 39 to 59 (IGAVFGVVEAIMPLLGWALGH), 67 to 87 (GVDHWIAFVMLALLGGHMIWA), 109 to 129 (IWLIAFTALATSIDAMAVGIT), 137 to 157 (IIAASVAIGLATALMVTLGTL), and 172 to 192 (ILGGLILIGIGIAVLYEHLAG).

This sequence belongs to the MntP (TC 9.B.29) family.

The protein localises to the cell inner membrane. Functionally, probably functions as a manganese efflux pump. This is Putative manganese efflux pump MntP from Chromohalobacter salexigens (strain ATCC BAA-138 / DSM 3043 / CIP 106854 / NCIMB 13768 / 1H11).